The sequence spans 308 residues: Oligopeptide transport ATP-binding protein AmiF (308 aa).

Residues 6–251 (VEIKDLEISF…PIHPYTQALL (246 aa)) enclose the ABC transporter domain. 42 to 49 (GESGSGKT) provides a ligand contact to ATP.

This sequence belongs to the ABC transporter superfamily.

Its subcellular location is the cell membrane. In terms of biological role, part of the binding-protein-dependent transport system for oligopeptides. Probably responsible for energy coupling to the transport system. This chain is Oligopeptide transport ATP-binding protein AmiF (amiF), found in Streptococcus pneumoniae serotype 4 (strain ATCC BAA-334 / TIGR4).